The chain runs to 219 residues: Large ribosomal subunit protein uL3 (219 aa).

The protein belongs to the universal ribosomal protein uL3 family. Part of the 50S ribosomal subunit. Forms a cluster with proteins L14 and L19.

Functionally, one of the primary rRNA binding proteins, it binds directly near the 3'-end of the 23S rRNA, where it nucleates assembly of the 50S subunit. This chain is Large ribosomal subunit protein uL3, found in Chlamydia pneumoniae (Chlamydophila pneumoniae).